Consider the following 204-residue polypeptide: Proteasome subunit beta type-3-A (204 aa).

Belongs to the peptidase T1B family. In terms of assembly, component of the 20S core complex of the 26S proteasome. The 26S proteasome is composed of a core protease (CP), known as the 20S proteasome, capped at one or both ends by the 19S regulatory particle (RP/PA700). The 20S proteasome core is composed of 28 subunits that are arranged in four stacked rings, resulting in a barrel-shaped structure. The two end rings are each formed by seven alpha subunits, and the two central rings are each formed by seven beta subunits. The catalytic chamber with the active sites is on the inside of the barrel.

Its subcellular location is the cytoplasm. It is found in the nucleus. Its function is as follows. Non-catalytic component of the proteasome, a multicatalytic proteinase complex which is characterized by its ability to cleave peptides with Arg, Phe, Tyr, Leu, and Glu adjacent to the leaving group at neutral or slightly basic pH. The proteasome has an ATP-dependent proteolytic activity. This chain is Proteasome subunit beta type-3-A (PBC1), found in Arabidopsis thaliana (Mouse-ear cress).